Reading from the N-terminus, the 58-residue chain is Small ribosomal subunit protein bS21 (58 aa).

Over residues 31 to 42 the composition is skewed to basic and acidic residues; the sequence is EIRKREHYEKPS. Positions 31–58 are disordered; that stretch reads EIRKREHYEKPSVKRKKKSEAARKRKYN. Residues 43–58 are compositionally biased toward basic residues; it reads VKRKKKSEAARKRKYN.

The protein belongs to the bacterial ribosomal protein bS21 family.

The sequence is that of Small ribosomal subunit protein bS21 from Agathobacter rectalis (strain ATCC 33656 / DSM 3377 / JCM 17463 / KCTC 5835 / VPI 0990) (Eubacterium rectale).